The chain runs to 572 residues: Linalool synthase TPS2, chloroplastic (572 aa).

Residues 1–27 constitute a chloroplast transit peptide; sequence EVEEPKTKISASTAEASSSRISSAKMT. A disordered region spans residues 1-45; that stretch reads EVEEPKTKISASTAEASSSRISSAKMTADGTIKLGDQSPLKQSEK. Positions 8–28 are enriched in low complexity; it reads KISASTAEASSSRISSAKMTA. (2E)-geranyl diphosphate is bound by residues Arg-284, Asp-321, Asp-325, Arg-462, and Asn-465. Residues Asp-321 and Asp-325 each contribute to the Mg(2+) site. Residues 321 to 325 carry the DDXXD motif motif; the sequence is DDVYD. Residues Asn-465, Thr-469, and Ser-473 each coordinate Mg(2+).

Belongs to the terpene synthase family. Tpsb subfamily. Monomer. Mg(2+) is required as a cofactor. Mn(2+) serves as cofactor. In terms of tissue distribution, expressed in flowers and fruits.

The protein localises to the plastid. It is found in the chloroplast. It catalyses the reaction (2E)-geranyl diphosphate = beta-myrcene + diphosphate. The enzyme catalyses (2E)-geranyl diphosphate + H2O = linalool + diphosphate. It carries out the reaction (2E)-geranyl diphosphate = (Z)-beta-ocimene + diphosphate. The catalysed reaction is (2E)-geranyl diphosphate = (E)-beta-ocimene + diphosphate. It participates in secondary metabolite biosynthesis; terpenoid biosynthesis. In terms of biological role, monoterpene synthase (mono-TPS) involved in the biosynthesis of monoterpenes natural products, constituent of coffee beverage aroma. Catalyzes the conversion of (2E)-geranyl diphosphate (GPP) into linalool and beta-myrcene, and, as minor products, cis-ocimene and trans-ocimene. Not able to use geranylgeranyl pyrophosphate (GGPP) and farnesyl pyrophosphate (FPP) as substrates. This is Linalool synthase TPS2, chloroplastic from Coffea arabica (Arabian coffee).